We begin with the raw amino-acid sequence, 95 residues long: Small ribosomal subunit protein bS6 (95 aa).

It belongs to the bacterial ribosomal protein bS6 family.

Its function is as follows. Binds together with bS18 to 16S ribosomal RNA. The polypeptide is Small ribosomal subunit protein bS6 (Streptococcus agalactiae serotype Ia (strain ATCC 27591 / A909 / CDC SS700)).